Reading from the N-terminus, the 219-residue chain is Large ribosomal subunit protein bL25 (219 aa).

The disordered stretch occupies residues 188 to 219 (TVAAPADTAVQPESSSTKGKKDEDGALAKDKK). Basic and acidic residues predominate over residues 206 to 219 (GKKDEDGALAKDKK).

Belongs to the bacterial ribosomal protein bL25 family. CTC subfamily. Part of the 50S ribosomal subunit; part of the 5S rRNA/L5/L18/L25 subcomplex. Contacts the 5S rRNA. Binds to the 5S rRNA independently of L5 and L18.

This is one of the proteins that binds to the 5S RNA in the ribosome where it forms part of the central protuberance. This is Large ribosomal subunit protein bL25 from Elusimicrobium minutum (strain Pei191).